Reading from the N-terminus, the 609-residue chain is Protein kinase PVPK-1 (609 aa).

Positions 1 to 19 (MESSVNGVDSLSEVQNSVS) are enriched in polar residues. Disordered regions lie at residues 1-51 (MESS…GHQT) and 80-100 (PTKL…EPNG). The region spanning 229–565 (FRLLKKLGCG…ATEIKQHPFF (337 aa)) is the Protein kinase domain. Residues 235–243 (LGCGDIGSV) and Lys258 contribute to the ATP site. Asp354 serves as the catalytic Proton acceptor. Positions 429–448 (GKSKKDKKSKPKNDMHNQVT) are disordered.

This sequence belongs to the protein kinase superfamily. Ser/Thr protein kinase family.

It catalyses the reaction L-seryl-[protein] + ATP = O-phospho-L-seryl-[protein] + ADP + H(+). The catalysed reaction is L-threonyl-[protein] + ATP = O-phospho-L-threonyl-[protein] + ADP + H(+). This chain is Protein kinase PVPK-1, found in Phaseolus vulgaris (Kidney bean).